The following is a 773-amino-acid chain: Leucine-rich repeat-containing protein let-4 (773 aa).

A signal peptide spans 1–20; the sequence is MRLLLCLLLFSTLLINSTNA. At 21 to 689 the chain is on the extracellular side; the sequence is CPGVITQACF…RLEKSFFTTT (669 aa). LRR repeat units follow at residues 61–84, 85–107, 109–132, 133–157, 159–181, 183–206, 207–230, 231–254, 256–278, 279–302, 303–326, 328–349, 350–373, 375–397, 399–421, and 486–516; these read VGLI…FFSG, LFIR…AFAG, NPVL…ALAG, LPNL…IFPN, NKLY…TFQN, KNSI…AIRG, LKQL…NFLN, LPVL…AFLN, PSLR…QFQT, FEQL…SLSG, LKQL…AFTN, SIVV…IISG, LPNL…AFYD, ASLV…TFLA, LNLL…AFNS, and LVQI…AFQQ. The chain crosses the membrane as a helical span at residues 690–710; sequence IIFICVGTAVIVLVVVIAGLC. Over 711-773 the chain is Cytoplasmic; it reads ISKHRQLQFE…PGSSYCNYYK (63 aa).

In terms of tissue distribution, in L1 larvae, expressed in a subset of epithelial cells including epidermal, vulval and rectal cells and the excretory duct and pore. Absent from internal epithelia such as the gut and pharyngeal tubes. Transiently expressed in the excretory canal cell at the 1.5-fold embryonic stage but no longer visible in this cell at hatching.

Its subcellular location is the apical cell membrane. In terms of biological role, required for apical extracellular matrix organization and epithelial junction maintenance. This is Leucine-rich repeat-containing protein let-4 (let-4) from Caenorhabditis elegans.